The following is a 370-amino-acid chain: Calcium-binding protein 1 (370 aa).

Residues 1 to 198 (MGGGDGAAFK…GRGDSVPAAA (198 aa)) form a disordered region. The N-myristoyl glycine moiety is linked to residue glycine 2. Residue glycine 4 is the site of S-palmitoyl cysteine attachment. 3 stretches are compositionally biased toward low complexity: residues 50 to 61 (HASAGPAAMSSH), 68 to 84 (KTSL…GGSR), and 148 to 157 (ALPAAASRPS). 4 consecutive EF-hand domains span residues 225 to 260 (EEIE…MGYM), 279 to 296 (GHVD…KLLA), 302 to 337 (IGVK…LLGH), and 339 to 370 (VGHR…MMSR). Ca(2+)-binding residues include aspartate 238, aspartate 240, aspartate 242, tyrosine 244, and aspartate 249. The Mg(2+) site is built by aspartate 238, aspartate 240, aspartate 242, and tyrosine 244. Ca(2+)-binding residues include aspartate 315, asparagine 317, aspartate 319, and glutamate 321. Serine 323 bears the Phosphoserine mark. Positions 326, 352, 353, 354, 356, 357, 358, 360, and 363 each coordinate Ca(2+).

As to quaternary structure, homodimer; when bound to calcium or magnesium. Interacts (via C-terminus) with ITPR1, ITPR2 and ITPR3. This binding is calcium dependent and the interaction correlates with calcium concentration. An additional calcium-independent interaction with the N-terminus of ITPR1 results in a decreased InsP(3) binding to the receptor. Interacts with CACNA1A (via C-terminal CDB motif) in the pre- and postsynaptic membranes. Interacts with CACNA1C (via C-terminal C and IQ motifs). The binding to the C motif is calcium independent whereas the binding to IQ requires the presence of calcium and is mutually exclusive with calmodulin binding. Interacts with CACNA1D. Interacts with TRPC5 (via C-terminus). Interacts (via EF-hands 1 and 2) at microtubules with MAP1LC3B. Interacts with MYO1C. Interacts (via EF-hands 1 and 2) with NSMF (via the central NLS-containing motif region), the interaction occurs in a calcium dependent manner after synaptic NMDA receptor stimulation and prevents nuclear import of NSMF. Interacts with SPACA9. Post-translationally, phosphorylated. The phosphorylation regulates the activity. Retina and brain. Somatodendritic compartment of neurons. Calbrain was found exclusively in brain where it is abundant in the hippocampus, habenular area in the epithalamus and in the cerebellum.

It localises to the cytoplasm. Its subcellular location is the cytoskeleton. The protein localises to the perinuclear region. It is found in the cell membrane. The protein resides in the golgi apparatus. It localises to the postsynaptic density. Its subcellular location is the cell cortex. Modulates calcium-dependent activity of inositol 1,4,5-triphosphate receptors (ITPRs). Inhibits agonist-induced intracellular calcium signaling. Enhances inactivation and does not support calcium-dependent facilitation of voltage-dependent P/Q-type calcium channels. Causes calcium-dependent facilitation and inhibits inactivation of L-type calcium channels by binding to the same sites as calmodulin in the C-terminal domain of CACNA1C, but has an opposite effect on channel function. Suppresses the calcium-dependent inactivation of CACNA1D. Inhibits TRPC5 channels. Prevents NMDA receptor-induced cellular degeneration. Required for the normal transfer of light signals through the retina. In Homo sapiens (Human), this protein is Calcium-binding protein 1 (CABP1).